Reading from the N-terminus, the 279-residue chain is Bifunctional protein FolD (279 aa).

NADP(+) is bound by residues 159–161 (GRS), S184, and T225.

This sequence belongs to the tetrahydrofolate dehydrogenase/cyclohydrolase family. As to quaternary structure, homodimer.

It carries out the reaction (6R)-5,10-methylene-5,6,7,8-tetrahydrofolate + NADP(+) = (6R)-5,10-methenyltetrahydrofolate + NADPH. The enzyme catalyses (6R)-5,10-methenyltetrahydrofolate + H2O = (6R)-10-formyltetrahydrofolate + H(+). The protein operates within one-carbon metabolism; tetrahydrofolate interconversion. In terms of biological role, catalyzes the oxidation of 5,10-methylenetetrahydrofolate to 5,10-methenyltetrahydrofolate and then the hydrolysis of 5,10-methenyltetrahydrofolate to 10-formyltetrahydrofolate. The protein is Bifunctional protein FolD of Methanospirillum hungatei JF-1 (strain ATCC 27890 / DSM 864 / NBRC 100397 / JF-1).